Here is a 194-residue protein sequence, read N- to C-terminus: GTP cyclohydrolase-2 (194 aa).

47 to 51 (RVHSE) is a GTP binding site. Zn(2+) is bound by residues Cys-52, Cys-63, and Cys-65. GTP contacts are provided by residues Gln-68, 90-92 (EGR), and Thr-112. Asp-124 functions as the Proton acceptor in the catalytic mechanism. The active-site Nucleophile is the Arg-126. GTP contacts are provided by Thr-147 and Lys-152.

The protein belongs to the GTP cyclohydrolase II family. In terms of assembly, homodimer. Zn(2+) is required as a cofactor.

It catalyses the reaction GTP + 4 H2O = 2,5-diamino-6-hydroxy-4-(5-phosphoribosylamino)-pyrimidine + formate + 2 phosphate + 3 H(+). Its pathway is cofactor biosynthesis; riboflavin biosynthesis; 5-amino-6-(D-ribitylamino)uracil from GTP: step 1/4. Its function is as follows. Catalyzes the conversion of GTP to 2,5-diamino-6-ribosylamino-4(3H)-pyrimidinone 5'-phosphate (DARP), formate and pyrophosphate. This chain is GTP cyclohydrolase-2, found in Buchnera aphidicola subsp. Acyrthosiphon pisum (strain APS) (Acyrthosiphon pisum symbiotic bacterium).